Reading from the N-terminus, the 269-residue chain is Probable ribosomal RNA small subunit methyltransferase A (269 aa).

S-adenosyl-L-methionine is bound by residues histidine 19, leucine 21, glycine 46, glutamate 67, aspartate 92, and asparagine 107.

Belongs to the class I-like SAM-binding methyltransferase superfamily. rRNA adenine N(6)-methyltransferase family. RsmA subfamily.

Its subcellular location is the cytoplasm. Specifically dimethylates two adjacent adenosines in the loop of a conserved hairpin near the 3'-end of 16S rRNA in the 30S particle. May play a critical role in biogenesis of 30S subunits. This Methanosarcina acetivorans (strain ATCC 35395 / DSM 2834 / JCM 12185 / C2A) protein is Probable ribosomal RNA small subunit methyltransferase A.